The chain runs to 976 residues: Apical junction component 1 homolog (976 aa).

The tract at residues 21–49 is disordered; it reads ATPGPASKCSPCERSVARPAEPAPFNKRH. S52 carries the post-translational modification Phosphoserine. Disordered stretches follow at residues 61–136, 220–242, and 264–294; these read GPAM…EPAY, PQFHGLTVPGPRHMALSRTPTPS, and YAERRSLPFTTPPGPTQFFYTEEPQGFRGSF. Residues 98–113 show a composition bias toward pro residues; the sequence is RAPPGLTPAPASPPVL. Residues 116-134 are compositionally biased toward basic and acidic residues; sequence RGREAQRAARAEASPRREP. S129 carries the post-translational modification Phosphoserine. At R322 the chain carries Omega-N-methylarginine. A disordered region spans residues 412-443; the sequence is LQVVPPSDPDPLLASWHGGTGTSPPRLATDSR. Phosphoserine occurs at positions 468, 509, and 512. 2 disordered regions span residues 539-574 and 614-660; these read DLRATERPSARAWELPGGRTRPPPHAAPDGPTSGRQ and LDSR…ADED. 2 stretches are compositionally biased toward low complexity: residues 616-625 and 633-655; these read SRPAGSGAPA and PASAGSAEEPAAPGEAADASPEP. R749 bears the Asymmetric dimethylarginine; alternate mark. Residue R749 is modified to Omega-N-methylarginine; alternate. The disordered stretch occupies residues 855 to 888; sequence GSPARPPPARSREPDMETLILTPPPGTAGLDQDG.

Its subcellular location is the apical cell membrane. The protein resides in the cell projection. The protein localises to the cilium. It localises to the cell junction. It is found in the adherens junction. Its function is as follows. May be involved in the control of adherens junction integrity. The polypeptide is Apical junction component 1 homolog (Homo sapiens (Human)).